The sequence spans 238 residues: MSSGYSSLEEDAEDFFFTARTSFFRRAPQGKPRSGQQDVEKEKETHSYLSKEEIKEKVHKYNLAVTDKLKMTLNSNGIYTGFIKVQMELCKPPQTSPNSGKLSPSSNGCMNTLHISSTNTVGEVIEALLKKFLVTESPAKFALYKRCHREDQVYACKLSDREHPLYLRLVAGPRTDTLSFVLREHEIGEWEAFSLPELQNFLRILDKEEDEQLQNLKRRYTAYRQKLEEALREVWKPD.

Position 2 is an N-acetylserine (serine 2). The interval 26–48 (RAPQGKPRSGQQDVEKEKETHSY) is disordered. Positions 38-48 (DVEKEKETHSY) are enriched in basic and acidic residues. A Ras-associating domain is found at 79–186 (YTGFIKVQME…TLSFVLREHE (108 aa)). The SARAH domain maps to 187–234 (IGEWEAFSLPELQNFLRILDKEEDEQLQNLKRRYTAYRQKLEEALREV).

As to expression, widely expressed.

The protein resides in the cytoplasm. Its subcellular location is the cytoskeleton. This chain is Ras association domain-containing protein 3 (RASSF3), found in Homo sapiens (Human).